Here is a 219-residue protein sequence, read N- to C-terminus: Octanoyltransferase (219 aa).

The 176-residue stretch at T31 to A206 folds into the BPL/LPL catalytic domain. Substrate contacts are provided by residues R70–H77, S137–G139, and G150–A152. C168 serves as the catalytic Acyl-thioester intermediate.

It belongs to the LipB family.

Its subcellular location is the cytoplasm. It carries out the reaction octanoyl-[ACP] + L-lysyl-[protein] = N(6)-octanoyl-L-lysyl-[protein] + holo-[ACP] + H(+). It participates in protein modification; protein lipoylation via endogenous pathway; protein N(6)-(lipoyl)lysine from octanoyl-[acyl-carrier-protein]: step 1/2. Its function is as follows. Catalyzes the transfer of endogenously produced octanoic acid from octanoyl-acyl-carrier-protein onto the lipoyl domains of lipoate-dependent enzymes. Lipoyl-ACP can also act as a substrate although octanoyl-ACP is likely to be the physiological substrate. The protein is Octanoyltransferase of Sodalis glossinidius (strain morsitans).